Reading from the N-terminus, the 256-residue chain is Enkurin (256 aa).

The tract at residues 48 to 92 (TMGPAKLEVPSPKDFLKKHSKEKTLPPKKKFDRHEPKKPPVPLRT) is disordered. A compositionally biased stretch (basic and acidic residues) spans 61–72 (DFLKKHSKEKTL). An SH3-binding motif is present at residues 83–89 (PKKPPVP). The Enkurin domain maps to 160–252 (KRNEEVKKAQ…VLEKHKIIYI (93 aa)). The IQ domain maps to 176–187 (IQENLRKAAMKR).

In terms of assembly, microtubule inner protein component of sperm flagellar doublet microtubules. Binds calmodulin via its IQ domain. Interacts with TRPC1, TRPC2, TRPC5, but not TRPC3. Interacts with CFAP45.

It localises to the cytoplasm. The protein resides in the cytoskeleton. The protein localises to the cilium axoneme. Its subcellular location is the flagellum axoneme. Its function is as follows. Adapter that functions to localize a calcium-sensitive signal transduction machinery in sperm to a calcium-permeable ion channel. Microtubule inner protein (MIP) part of the dynein-decorated doublet microtubules (DMTs) in cilia axoneme, which is required for motile cilia beating. The chain is Enkurin (ENKUR) from Sus scrofa (Pig).